The following is a 546-amino-acid chain: Chaperonin GroEL 2 (546 aa).

ATP contacts are provided by residues 30 to 33 (TLGP), lysine 51, 87 to 91 (DGTTT), glycine 415, and aspartate 495. Residues 527-546 (DAAPATAPGGPGAGGPGFDF) form a disordered region. A compositionally biased stretch (gly residues) spans 535–546 (GGPGAGGPGFDF).

This sequence belongs to the chaperonin (HSP60) family. As to quaternary structure, forms a cylinder of 14 subunits composed of two heptameric rings stacked back-to-back. Interacts with the co-chaperonin GroES.

It localises to the cytoplasm. It carries out the reaction ATP + H2O + a folded polypeptide = ADP + phosphate + an unfolded polypeptide.. In terms of biological role, together with its co-chaperonin GroES, plays an essential role in assisting protein folding. The GroEL-GroES system forms a nano-cage that allows encapsulation of the non-native substrate proteins and provides a physical environment optimized to promote and accelerate protein folding. This is Chaperonin GroEL 2 from Burkholderia ambifaria (strain ATCC BAA-244 / DSM 16087 / CCUG 44356 / LMG 19182 / AMMD) (Burkholderia cepacia (strain AMMD)).